An 806-amino-acid chain; its full sequence is Phenylalanine--tRNA ligase beta subunit (806 aa).

One can recognise a tRNA-binding domain in the interval 39–154; that stretch reads SAGLKKIVVG…EAIAPGTDVY (116 aa). The 76-residue stretch at 410–485 folds into the B5 domain; that stretch reads PQPKVIQFDS…RLYGYDNLPS (76 aa). Mg(2+) contacts are provided by aspartate 463, aspartate 469, glutamate 472, and glutamate 473. An FDX-ACB domain is found at 713-806; the sequence is PKFPEVTRDI…LVATFQAKVR (94 aa).

Belongs to the phenylalanyl-tRNA synthetase beta subunit family. Type 1 subfamily. As to quaternary structure, tetramer of two alpha and two beta subunits. Mg(2+) is required as a cofactor.

It is found in the cytoplasm. It carries out the reaction tRNA(Phe) + L-phenylalanine + ATP = L-phenylalanyl-tRNA(Phe) + AMP + diphosphate + H(+). This is Phenylalanine--tRNA ligase beta subunit from Latilactobacillus sakei subsp. sakei (strain 23K) (Lactobacillus sakei subsp. sakei).